The sequence spans 341 residues: Phenylalanine--tRNA ligase alpha subunit (341 aa).

Residue Glu252 participates in Mg(2+) binding.

It belongs to the class-II aminoacyl-tRNA synthetase family. Phe-tRNA synthetase alpha subunit type 1 subfamily. Tetramer of two alpha and two beta subunits. Mg(2+) serves as cofactor.

It localises to the cytoplasm. It carries out the reaction tRNA(Phe) + L-phenylalanine + ATP = L-phenylalanyl-tRNA(Phe) + AMP + diphosphate + H(+). In Malacoplasma penetrans (strain HF-2) (Mycoplasma penetrans), this protein is Phenylalanine--tRNA ligase alpha subunit.